Reading from the N-terminus, the 226-residue chain is UPF0758 protein Spy49_0870 (226 aa).

The MPN domain maps to 103–225 (SVLTSVQVAE…YYSFREKSTL (123 aa)). Zn(2+) contacts are provided by histidine 174, histidine 176, and aspartate 187. Positions 174 to 187 (HNHPSGNIEPSSND) match the JAMM motif motif.

Belongs to the UPF0758 family.

The protein is UPF0758 protein Spy49_0870 of Streptococcus pyogenes serotype M49 (strain NZ131).